Consider the following 150-residue polypeptide: Ribonuclease H (150 aa).

The RNase H type-1 domain maps to 7 to 148; the sequence is ESNIVEIWTD…ADQLATKARM (142 aa). Mg(2+) contacts are provided by D16, E54, D76, and D140.

The protein belongs to the RNase H family. In terms of assembly, monomer. The cofactor is Mg(2+).

Its subcellular location is the cytoplasm. The catalysed reaction is Endonucleolytic cleavage to 5'-phosphomonoester.. Its function is as follows. Endonuclease that specifically degrades the RNA of RNA-DNA hybrids. The sequence is that of Ribonuclease H from Granulibacter bethesdensis (strain ATCC BAA-1260 / CGDNIH1).